The primary structure comprises 1500 residues: Secreted chitinase LysM12 (1500 aa).

The first 23 residues, 1 to 23 (MAPLWNGMAAGLLLSAAVVSGQA), serve as a signal peptide directing secretion. N-linked (GlcNAc...) asparagine glycosylation is found at Asn53, Asn225, Asn251, and Asn270. 2 LysM domains span residues 303 to 348 (RTQK…HVCC) and 367 to 415 (ATTT…VICI). Residues 428–496 (DAECGPQVPG…TNGCISHCGM (69 aa)) enclose the Chitin-binding type-1 domain. Cystine bridges form between Cys431-Cys459, Cys453-Cys465, Cys458-Cys472, and Cys490-Cys494. Positions 507-879 (FRSVGYYESY…PGMILQMKSG (373 aa)) constitute a GH18 domain. Catalysis depends on Glu625, which acts as the Proton donor. Chitin is bound at residue Tyr626. N-linked (GlcNAc...) asparagine glycans are attached at residues Asn721 and Asn800. Position 852 (Trp852) interacts with chitin. Asn892 and Asn983 each carry an N-linked (GlcNAc...) asparagine glycan. A disordered region spans residues 1164–1193 (IPKDIPYPDKTKRKDKDDDDNKKTEATDSE). Over residues 1169–1193 (PYPDKTKRKDKDDDDNKKTEATDSE) the composition is skewed to basic and acidic residues.

It belongs to the glycosyl hydrolase 18 family. Chitinase class V subfamily.

The protein localises to the secreted. The catalysed reaction is Random endo-hydrolysis of N-acetyl-beta-D-glucosaminide (1-&gt;4)-beta-linkages in chitin and chitodextrins.. Secreted chitinase involved in the degradation of chitin, a component of the cell walls of fungi and exoskeletal elements of some animals (including worms and arthropods). Involved in pathogenesis via manipulation of host defenses for successful infection. The sequence is that of Secreted chitinase LysM12 from Penicillium expansum (Blue mold rot fungus).